A 78-amino-acid polypeptide reads, in one-letter code: uncharacterized protein (78 aa).

Residues glutamate 58–proline 78 form a disordered region.

This is an uncharacterized protein from Vaccinia virus (strain Copenhagen) (VACV).